Reading from the N-terminus, the 61-residue chain is Small ribosomal subunit protein uS14 (61 aa).

Zn(2+) contacts are provided by cysteine 24, cysteine 27, cysteine 40, and cysteine 43.

This sequence belongs to the universal ribosomal protein uS14 family. Zinc-binding uS14 subfamily. Part of the 30S ribosomal subunit. Contacts proteins S3 and S10. Zn(2+) serves as cofactor.

Binds 16S rRNA, required for the assembly of 30S particles and may also be responsible for determining the conformation of the 16S rRNA at the A site. The polypeptide is Small ribosomal subunit protein uS14 (Borreliella afzelii (strain PKo) (Borrelia afzelii)).